Here is a 175-residue protein sequence, read N- to C-terminus: Cytidylate kinase (175 aa).

7 to 15 (GLPGSGTTT) lines the ATP pocket.

The protein belongs to the cytidylate kinase family. Type 2 subfamily.

It localises to the cytoplasm. The catalysed reaction is CMP + ATP = CDP + ADP. It carries out the reaction dCMP + ATP = dCDP + ADP. This Methanococcoides burtonii (strain DSM 6242 / NBRC 107633 / OCM 468 / ACE-M) protein is Cytidylate kinase.